The following is a 119-amino-acid chain: NADH-quinone oxidoreductase subunit A (119 aa).

3 consecutive transmembrane segments (helical) span residues 7–27 (FPVL…MFLG), 63–83 (LIAI…PWGV), and 88–108 (IGWF…VGFV).

This sequence belongs to the complex I subunit 3 family. NDH-1 is composed of 14 different subunits. Subunits NuoA, H, J, K, L, M, N constitute the membrane sector of the complex.

It is found in the cell membrane. The enzyme catalyses a quinone + NADH + 5 H(+)(in) = a quinol + NAD(+) + 4 H(+)(out). Functionally, NDH-1 shuttles electrons from NADH, via FMN and iron-sulfur (Fe-S) centers, to quinones in the respiratory chain. The immediate electron acceptor for the enzyme in this species is believed to be ubiquinone. Couples the redox reaction to proton translocation (for every two electrons transferred, four hydrogen ions are translocated across the cytoplasmic membrane), and thus conserves the redox energy in a proton gradient. The protein is NADH-quinone oxidoreductase subunit A of Polynucleobacter asymbioticus (strain DSM 18221 / CIP 109841 / QLW-P1DMWA-1) (Polynucleobacter necessarius subsp. asymbioticus).